A 649-amino-acid polypeptide reads, in one-letter code: Probable ADP-ribosylation factor GTPase-activating protein AGD14 (649 aa).

In terms of domain architecture, Arf-GAP spans 12-130 (EKIIRGLMKL…KYAGANDADK (119 aa)). Residues 27 to 50 (CINCNSLGPQYVCTTFWTFVCMAC) form a C4-type zinc finger. 4 disordered regions span residues 124 to 159 (GAND…QSPP), 209 to 279 (FSNE…VRSV), 294 to 316 (LGEA…SNHV), and 366 to 391 (FTPA…SAPK). Basic and acidic residues predominate over residues 127-146 (DADKPSKDSQDHVSSEDMTR). Residues 150–159 (SYHSYSQSPP) are compositionally biased toward low complexity. Composition is skewed to polar residues over residues 248 to 257 (PQFQHSNAPP), 269 to 279 (RTTSSGSVRSV), 300 to 315 (ESRQ…TSNH), and 366 to 385 (FTPA…SRPS).

GTPase-activating protein (GAP) for ADP ribosylation factor (ARF). The polypeptide is Probable ADP-ribosylation factor GTPase-activating protein AGD14 (AGD14) (Arabidopsis thaliana (Mouse-ear cress)).